We begin with the raw amino-acid sequence, 275 residues long: Formamidopyrimidine-DNA glycosylase (275 aa).

P2 serves as the catalytic Schiff-base intermediate with DNA. The active-site Proton donor is E3. K58 (proton donor; for beta-elimination activity) is an active-site residue. DNA is bound by residues H93, R111, and R156. Residues F241–R275 form an FPG-type zinc finger. R265 (proton donor; for delta-elimination activity) is an active-site residue.

The protein belongs to the FPG family. In terms of assembly, monomer. Zn(2+) is required as a cofactor.

It carries out the reaction Hydrolysis of DNA containing ring-opened 7-methylguanine residues, releasing 2,6-diamino-4-hydroxy-5-(N-methyl)formamidopyrimidine.. The catalysed reaction is 2'-deoxyribonucleotide-(2'-deoxyribose 5'-phosphate)-2'-deoxyribonucleotide-DNA = a 3'-end 2'-deoxyribonucleotide-(2,3-dehydro-2,3-deoxyribose 5'-phosphate)-DNA + a 5'-end 5'-phospho-2'-deoxyribonucleoside-DNA + H(+). Its function is as follows. Involved in base excision repair of DNA damaged by oxidation or by mutagenic agents. Acts as a DNA glycosylase that recognizes and removes damaged bases. Has a preference for oxidized purines, such as 7,8-dihydro-8-oxoguanine (8-oxoG). Has AP (apurinic/apyrimidinic) lyase activity and introduces nicks in the DNA strand. Cleaves the DNA backbone by beta-delta elimination to generate a single-strand break at the site of the removed base with both 3'- and 5'-phosphates. This Burkholderia multivorans (strain ATCC 17616 / 249) protein is Formamidopyrimidine-DNA glycosylase.